We begin with the raw amino-acid sequence, 151 residues long: Inactive oocyte-specific homeobox protein 2 (151 aa).

The interval 1-97 (MAEGPSLHPK…PMASRKFRKE (97 aa)) is disordered. Over residues 37–54 (MRQSPLVTPGSTTKSSLS) the composition is skewed to polar residues.

The protein belongs to the paired homeobox family. Obox subfamily. As to expression, specifically expressed in oocytes and early embryos.

In contrast to other Obox family proteins, displays a truncated homeobox domain and does not bind DNA. The sequence is that of Inactive oocyte-specific homeobox protein 2 from Mus musculus (Mouse).